We begin with the raw amino-acid sequence, 467 residues long: UDP-N-acetylmuramate--L-alanine ligase (467 aa).

114-120 (GTHGKTT) provides a ligand contact to ATP.

This sequence belongs to the MurCDEF family.

The protein resides in the cytoplasm. The catalysed reaction is UDP-N-acetyl-alpha-D-muramate + L-alanine + ATP = UDP-N-acetyl-alpha-D-muramoyl-L-alanine + ADP + phosphate + H(+). It participates in cell wall biogenesis; peptidoglycan biosynthesis. Its function is as follows. Cell wall formation. The polypeptide is UDP-N-acetylmuramate--L-alanine ligase (Nitrobacter winogradskyi (strain ATCC 25391 / DSM 10237 / CIP 104748 / NCIMB 11846 / Nb-255)).